The sequence spans 188 residues: ATP synthase subunit b (188 aa).

The chain crosses the membrane as a helical span at residues 5–25; that stretch reads MLLIFMMIVMIASSAMAAEAE.

The protein belongs to the ATPase B chain family. As to quaternary structure, F-type ATPases have 2 components, F(1) - the catalytic core - and F(0) - the membrane proton channel. F(1) has five subunits: alpha(3), beta(3), gamma(1), delta(1), epsilon(1). F(0) has three main subunits: a(1), b(2) and c(10-14). The alpha and beta chains form an alternating ring which encloses part of the gamma chain. F(1) is attached to F(0) by a central stalk formed by the gamma and epsilon chains, while a peripheral stalk is formed by the delta and b chains.

Its subcellular location is the cell inner membrane. F(1)F(0) ATP synthase produces ATP from ADP in the presence of a proton or sodium gradient. F-type ATPases consist of two structural domains, F(1) containing the extramembraneous catalytic core and F(0) containing the membrane proton channel, linked together by a central stalk and a peripheral stalk. During catalysis, ATP synthesis in the catalytic domain of F(1) is coupled via a rotary mechanism of the central stalk subunits to proton translocation. Functionally, component of the F(0) channel, it forms part of the peripheral stalk, linking F(1) to F(0). The protein is ATP synthase subunit b of Thermodesulfovibrio yellowstonii (strain ATCC 51303 / DSM 11347 / YP87).